We begin with the raw amino-acid sequence, 182 residues long: Large ribosomal subunit protein uL6 (182 aa).

Belongs to the universal ribosomal protein uL6 family. As to quaternary structure, part of the 50S ribosomal subunit.

In terms of biological role, this protein binds to the 23S rRNA, and is important in its secondary structure. It is located near the subunit interface in the base of the L7/L12 stalk, and near the tRNA binding site of the peptidyltransferase center. The sequence is that of Large ribosomal subunit protein uL6 from Methanococcus maripaludis (strain C6 / ATCC BAA-1332).